Consider the following 417-residue polypeptide: MQVEANSERRVKILGIDRSENSPVLTYMETEDDPNFRNSKLAAAPHTVHMMDSGFLAINRQCLVKGKAILAREPKSSNEHMIDDLPKHAHDQHTLSILRDFIDQLKLHNVYEINFYDPLDSSGKLAVIPMLIALWKCMLASETDICDQEVLKSIMNSVIAKFELQIPCKNAVIDATLSGSREEVHIIAEDGSLENSNGTTEHFNKKHDLVFVKTDLHPEDFTPQMFPSQAKAKLLRDAFNNEEDEDTFPDILVPAYMTAHSKNRVRQEDYTCLEVEFDSQVALEKLMNEHEQVEGFEVQQGGILVALKKDSFFDDELIEKIAIAIATESRQSVSSVSFDLLKLGPGASLVTLANSRRFEPECRVVLQIEVKPVSPGETSSEGISDEHHYEEYDEDDIMEEEEAPSARQDDTYDEDEE.

The tract at residues 373 to 417 is disordered; sequence VSPGETSSEGISDEHHYEEYDEDDIMEEEEAPSARQDDTYDEDEE. Residues 391–403 are compositionally biased toward acidic residues; that stretch reads EYDEDDIMEEEEA.

It belongs to the GHMP kinase family. Xol-1 subfamily.

It is found in the nucleus. In terms of biological role, sex-determining factor that is required for sexual differentiation and X chromosome dosage compensation to promote male development. High expression during gastrulation triggers male development, while low expression at that time triggers hermaphrodite development. Although related to GHMP kinase, its mode of action remains unclear. This is XO lethal protein 1 from Caenorhabditis elegans.